Here is a 497-residue protein sequence, read N- to C-terminus: Glycerol kinase (497 aa).

Residue Thr-12 coordinates ADP. ATP contacts are provided by Thr-12, Thr-13, and Ser-14. Thr-12 contacts sn-glycerol 3-phosphate. An ADP-binding site is contributed by Arg-16. Residues Arg-82, Glu-83, Tyr-134, and Asp-243 each contribute to the sn-glycerol 3-phosphate site. Glycerol contacts are provided by Arg-82, Glu-83, Tyr-134, Asp-243, and Gln-244. Thr-265 and Gly-308 together coordinate ADP. Residues Thr-265, Gly-308, Gln-312, and Gly-411 each coordinate ATP. Gly-411 serves as a coordination point for ADP.

It belongs to the FGGY kinase family.

It carries out the reaction glycerol + ATP = sn-glycerol 3-phosphate + ADP + H(+). It participates in polyol metabolism; glycerol degradation via glycerol kinase pathway; sn-glycerol 3-phosphate from glycerol: step 1/1. With respect to regulation, inhibited by fructose 1,6-bisphosphate (FBP). Its function is as follows. Key enzyme in the regulation of glycerol uptake and metabolism. Catalyzes the phosphorylation of glycerol to yield sn-glycerol 3-phosphate. The polypeptide is Glycerol kinase (Xanthobacter autotrophicus (strain ATCC BAA-1158 / Py2)).